The following is a 288-amino-acid chain: MFNFGSKILVLFLVAFPCGLISFGRVSADSESAEDIFPDSTVDEEEEEEEDEVLVEEDQVPGSETEDDIDEDAAVGDVTSHPDADTTIVFVTGEEFPANEIVKFLVGFTNKGSQDFTVHSLEASFRYPQDFQFYIQNFTALPLSTVVQPQKQASFEYSFIPAQPMAGRPFGLVILLNYQDSEGNGFQTAIYNQTVTIVELEEGLDGETIFMYIFLTGLVVLAVFGMYQVLESRTRKRFPVKVETGTGGMNGVDISWIPQETLNIMSKASASPKASPRKRTKRAVGVDQ.

The signal sequence occupies residues M1 to A28. Topologically, residues D29–T208 are lumenal. The disordered stretch occupies residues E34 to I69. 2 N-linked (GlcNAc...) asparagine glycosylation sites follow: N137 and N192. Residues I209–V229 form a helical membrane-spanning segment. At L230–Q288 the chain is on the cytoplasmic side. Residues K267–Q288 are disordered.

Belongs to the TRAP-alpha family. Heterotetramer of TRAP-alpha, TRAP-beta, TRAP-delta and TRAP-gamma. Phosphorylated in its cytoplasmic tail.

The protein localises to the endoplasmic reticulum membrane. TRAP proteins are part of a complex whose function is to bind calcium to the ER membrane and thereby regulate the retention of ER resident proteins. May be involved in the recycling of the translocation apparatus after completion of the translocation process or may function as a membrane-bound chaperone facilitating folding of translocated proteins. The chain is Translocon-associated protein subunit alpha (ssr1) from Oncorhynchus mykiss (Rainbow trout).